The primary structure comprises 357 residues: MKKVVVGMSGGVDSSVAAYLLKEAGYDVIGVTMQIWQDEDNQTVEENGGCCGLSAVDDARRVANSLDIPYYVMNFKSEFKANVMDYFVKEYQAGRTPNPCIACNRYVKWESLLTRSLQIGADYIATGHYARIVTLPNGRFALKKSATAAKDQTYALYNLTQDQLSKTLMPVGEYTKEEVREIAAKIGLLVANKPDSQEICFVPDNNYAGFIEDYTGQKIIPGNFVDTKGNILGRHQGIIHYTVGQRKGLGIALGRPAFVVEIRPETNEVVIGSNDDIFTDRLIANKLNAMAVEEFEDGMEVIAKIRYNHEGSKCTIRKVSDTEIACEFETPQRAVTPGQAVVFYQGDIVVGGGTIIK.

Residues 7–14 (GMSGGVDS) and M33 contribute to the ATP site. C103 acts as the Nucleophile in catalysis. C103 and C200 are disulfide-bonded. G127 lines the ATP pocket. The interval 150-152 (KDQ) is interaction with tRNA. C200 acts as the Cysteine persulfide intermediate in catalysis. The segment at 306-307 (RY) is interaction with tRNA.

Belongs to the MnmA/TRMU family.

The protein localises to the cytoplasm. It catalyses the reaction S-sulfanyl-L-cysteinyl-[protein] + uridine(34) in tRNA + AH2 + ATP = 2-thiouridine(34) in tRNA + L-cysteinyl-[protein] + A + AMP + diphosphate + H(+). Catalyzes the 2-thiolation of uridine at the wobble position (U34) of tRNA, leading to the formation of s(2)U34. The chain is tRNA-specific 2-thiouridylase MnmA from Lachnoclostridium phytofermentans (strain ATCC 700394 / DSM 18823 / ISDg) (Clostridium phytofermentans).